The primary structure comprises 629 residues: Serine/threonine-protein kinase ICK (629 aa).

A Protein kinase domain is found at 4-284 (YTTIKQLGDG…ASQALRYPYF (281 aa)). ATP contacts are provided by residues 10–18 (LGDGTYGSV) and Lys-33. Asp-125 functions as the Proton acceptor in the catalytic mechanism. Thr-157 carries the post-translational modification Phosphothreonine. At Tyr-159 the chain carries Phosphotyrosine. Ser-161 carries the post-translational modification Phosphoserine. 3 disordered regions span residues 292–322 (ISTQ…PAQA), 454–482 (PSEP…QSTA), and 579–629 (GYSS…PSRR). Residues 309-321 (GPPPYVKPAPPAQ) show a composition bias toward pro residues. Positions 460–482 (TGTSVSTQASSQRRDTPTLQSTA) are enriched in polar residues.

It belongs to the protein kinase superfamily. CMGC Ser/Thr protein kinase family. CDC2/CDKX subfamily. Mg(2+) serves as cofactor. Autophosphorylated on serine and threonine residues. Phosphorylation at Thr-157 increases kinase activity. As to expression, expressed in embryonic heart from day 11. Highly expressed in the uterus and at lower levels in brain, heart, lung, kidney, skeletal muscle, ovary and liver in adult tissues.

It is found in the cytoplasm. The protein resides in the cell projection. Its subcellular location is the cilium. It localises to the nucleus. The protein localises to the cytoskeleton. It is found in the cilium basal body. It catalyses the reaction L-seryl-[protein] + ATP = O-phospho-L-seryl-[protein] + ADP + H(+). The enzyme catalyses L-threonyl-[protein] + ATP = O-phospho-L-threonyl-[protein] + ADP + H(+). In terms of biological role, required for ciliogenesis, particularly in neuronal and retinal progenitor cells. Phosphorylates KIF3A. Involved in the control of ciliary length. Regulates the ciliary localization of SHH pathway components as well as the localization of IFT components at ciliary tips. May play a role in cardiac development. Regulates intraflagellar transport (IFT) speed and negatively regulates cilium length in a cAMP and mTORC1 signaling-dependent manner and this regulation requires its kinase activity. The polypeptide is Serine/threonine-protein kinase ICK (Cilk1) (Rattus norvegicus (Rat)).